The following is a 1052-amino-acid chain: SE-cephalotoxin (1052 aa).

The N-terminal stretch at 1-21 (MMGTSRCVILLFALLLWAANA) is a signal peptide. The propeptide occupies 22–29 (APPEIHTT). Asn41 is a glycosylation site (N-linked (GlcNAc...) asparagine). The stretch at 130–194 (TGVNRKLDQI…DMNKRRLMAE (65 aa)) forms a coiled coil. Residue Asn353 is glycosylated (N-linked (GlcNAc...) asparagine). The region spanning 460–497 (PGNPCNHGCNGHGECKVVPYTDQFQCFCHGNYEGKMCQ) is the EGF-like domain. Cystine bridges form between Cys464–Cys474, Cys468–Cys485, and Cys487–Cys496. 2 N-linked (GlcNAc...) asparagine glycosylation sites follow: Asn576 and Asn715. One can recognise a Sushi domain in the interval 709 to 769 (TSCPPLNVTH…QWSATPKCES (61 aa)). Cystine bridges form between Cys711-Cys752, Cys739-Cys767, Cys780-Cys814, Cys784-Cys820, Cys795-Cys804, Cys829-Cys847, and Cys841-Cys858. In terms of domain architecture, TSP type-1 spans 768–821 (ESSWSRWSKWSACASTCGNATQSRRRRCLGQSESEKCIGPSKQVRKCFVEDCCQ). Residue Asn786 is glycosylated (N-linked (GlcNAc...) asparagine). In terms of domain architecture, LDL-receptor class A spans 819–859 (CCQEKYGKFKCDNNKCISLSRVCDGNDDCRNAEDESKSRCK).

As to quaternary structure, monomer. Expressed by the salivary gland.

It localises to the secreted. This is SE-cephalotoxin from Acanthosepion esculentum (Golden cuttlefish).